The following is a 147-amino-acid chain: Hemoglobin subunit beta-2 (147 aa).

Valine 2 is modified (N-acetylvaline). The 145-residue stretch at 3-147 (HLTDAEKSAV…VATALAHKYH (145 aa)) folds into the Globin domain. Residue lysine 18 is modified to N6-succinyllysine. The residue at position 42 (tyrosine 42) is a Phosphotyrosine. Residues serine 45, serine 51, and serine 53 each carry the phosphoserine modification. Lysine 60 is subject to N6-succinyllysine. Heme b is bound by residues histidine 64 and histidine 93. Arginine 105 bears the Asymmetric dimethylarginine mark. Threonine 124 bears the Phosphothreonine mark.

This sequence belongs to the globin family. As to quaternary structure, heterotetramer of two alpha chains and two beta chains. As to expression, red blood cells.

In terms of biological role, involved in oxygen transport from the lung to the various peripheral tissues. This Mus musculus (Mouse) protein is Hemoglobin subunit beta-2 (Hbb-b2).